Reading from the N-terminus, the 648-residue chain is Biosynthetic arginine decarboxylase (648 aa).

N6-(pyridoxal phosphate)lysine is present on Lys109. Residue 291–301 (LDVGGGLGVDY) participates in substrate binding.

This sequence belongs to the Orn/Lys/Arg decarboxylase class-II family. SpeA subfamily. It depends on Mg(2+) as a cofactor. The cofactor is pyridoxal 5'-phosphate.

The enzyme catalyses L-arginine + H(+) = agmatine + CO2. It functions in the pathway amine and polyamine biosynthesis; agmatine biosynthesis; agmatine from L-arginine: step 1/1. Its function is as follows. Catalyzes the biosynthesis of agmatine from arginine. The chain is Biosynthetic arginine decarboxylase from Prochlorococcus marinus (strain MIT 9303).